The sequence spans 366 residues: MSATRRTVASAGSIVVKIGSSALTSLVGGLDVGRLDALADAIEARMRAGSDVVVVSSGAVGAGLAPLGLTKRPRDLATKQAAASVGQLALAHAWGTSFARYGRTVGQVLLTADDIARRAQHRNAQRTLDRLRALHAVAIVNENDTVATAELRFGDNDRLAALVAHLVGADALVLLSDVDGLYDGDPRKGNATLIPEVNSPEDLDGVVAGSGGALGTGGMASKLSAARLAADAGVPVLLAAASDAGAALRDASVGTAFAARPSRLSARKFWVRHAADEQGILHIDEGAVRAVVTRRRSLLPAGITAVSGRFYGGDVVSLLGPEERPVARGVVAYDSAEISDILGKSTQELPAEMQRPVVHADDLVPL.

ATP is bound at residue Lys-17. Residues Ser-57, Asp-144, and Asn-156 each coordinate substrate. ATP is bound by residues 176-177 (SD) and 216-222 (TGGMASK). A PUA domain is found at 278–352 (QGILHIDEGA…GKSTQELPAE (75 aa)).

This sequence belongs to the glutamate 5-kinase family.

Its subcellular location is the cytoplasm. It carries out the reaction L-glutamate + ATP = L-glutamyl 5-phosphate + ADP. It participates in amino-acid biosynthesis; L-proline biosynthesis; L-glutamate 5-semialdehyde from L-glutamate: step 1/2. Catalyzes the transfer of a phosphate group to glutamate to form L-glutamate 5-phosphate. This Rhodococcus opacus (strain B4) protein is Glutamate 5-kinase.